Consider the following 287-residue polypeptide: Putative daunorubicin C-13 ketoreductase DnrU (287 aa).

24 to 30 (GATSGIG) provides a ligand contact to NADP(+). Serine 149 is a substrate binding site. Tyrosine 175 serves as the catalytic Proton acceptor.

Belongs to the short-chain dehydrogenases/reductases (SDR) family.

Its function is as follows. Could reduce the 13-carbonyl of daunorubicin to produce (13S)-13-dihydrodaunorubicin. Could also be able to reduce the 13-carbonyl of doxorubicin. This Streptomyces sp. (strain C5) protein is Putative daunorubicin C-13 ketoreductase DnrU.